The primary structure comprises 427 residues: Histidinol dehydrogenase (427 aa).

Residues Y127, Q185, and N208 each contribute to the NAD(+) site. 3 residues coordinate substrate: S232, Q254, and H257. The Zn(2+) site is built by Q254 and H257. Residues E321 and H322 each act as proton acceptor in the active site. Substrate-binding residues include H322, D355, E409, and H414. A Zn(2+)-binding site is contributed by D355. H414 is a Zn(2+) binding site.

This sequence belongs to the histidinol dehydrogenase family. It depends on Zn(2+) as a cofactor.

The catalysed reaction is L-histidinol + 2 NAD(+) + H2O = L-histidine + 2 NADH + 3 H(+). It participates in amino-acid biosynthesis; L-histidine biosynthesis; L-histidine from 5-phospho-alpha-D-ribose 1-diphosphate: step 9/9. Catalyzes the sequential NAD-dependent oxidations of L-histidinol to L-histidinaldehyde and then to L-histidine. In Haemophilus influenzae (strain 86-028NP), this protein is Histidinol dehydrogenase.